A 247-amino-acid polypeptide reads, in one-letter code: TM2 domain-containing protein 3 (247 aa).

The first 29 residues, 1 to 29, serve as a signal peptide directing secretion; it reads MAGGVLPLRGLRALCRVLLFLSQFCILSG. The Extracellular segment spans residues 30–179; that stretch reads GEQSQALAQS…RTFPKMLYCN (150 aa). 6 N-linked (GlcNAc...) asparagine glycosylation sites follow: Asn-87, Asn-122, Asn-140, Asn-157, Asn-169, and Asn-179. A helical transmembrane segment spans residues 180–200; sequence WTGGYKWSTALALSITLGGFG. A TM2 domain is found at 183 to 230; that stretch reads GYKWSTALALSITLGGFGADRFYLGQWREGLGKLFSFGGLGIWTLIDV. The Cytoplasmic segment spans residues 201–215; it reads ADRFYLGQWREGLGK. The chain crosses the membrane as a helical span at residues 216–236; it reads LFSFGGLGIWTLIDVLLIGVG. Residues 237-247 are Extracellular-facing; it reads YVGPADGSLYI.

This sequence belongs to the TM2 family. As to expression, widely expressed.

It is found in the membrane. Functionally, probable positive regulator of Notch signaling. The protein is TM2 domain-containing protein 3 (TM2D3) of Homo sapiens (Human).